Reading from the N-terminus, the 480-residue chain is Glutamate--tRNA ligase (480 aa).

The short motif at 9–19 (PSPTGNLHIGT) is the 'HIGH' region element. Positions 250-254 (KLSKR) match the 'KMSKS' region motif. Lysine 253 contributes to the ATP binding site.

Belongs to the class-I aminoacyl-tRNA synthetase family. Glutamate--tRNA ligase type 1 subfamily. As to quaternary structure, monomer.

It is found in the cytoplasm. It carries out the reaction tRNA(Glu) + L-glutamate + ATP = L-glutamyl-tRNA(Glu) + AMP + diphosphate. Its function is as follows. Catalyzes the attachment of glutamate to tRNA(Glu) in a two-step reaction: glutamate is first activated by ATP to form Glu-AMP and then transferred to the acceptor end of tRNA(Glu). The protein is Glutamate--tRNA ligase of Microcystis aeruginosa (strain NIES-843 / IAM M-2473).